The sequence spans 1473 residues: G8 domain-containing protein DDB_G0286311 (1473 aa).

The N-terminal stretch at 1–21 (MKRFFIVILFILLVCIFNVKS) is a signal peptide. The helical transmembrane segment at 105–125 (IVLMIATITGSLLFIRFNIGF) threads the bilayer. N-linked (GlcNAc...) asparagine glycosylation is present at Asn126. The chain crosses the membrane as a helical span at residues 130–150 (TLIILIIGTIFLIGSSHSITL). Asn203, Asn241, and Asn275 each carry an N-linked (GlcNAc...) asparagine glycan. Low complexity predominate over residues 298 to 375 (TGTTPTTTPT…PTTTPTTTPT (78 aa)). The tract at residues 298–400 (TGTTPTTTPT…SSSPSSPSFS (103 aa)) is disordered. Over residues 376–389 (DSCPTTSTWRPTMA) the composition is skewed to polar residues. The span at 390–400 (SSSSPSSPSFS) shows a compositional bias: low complexity. Asn444, Asn637, Asn680, Asn1078, Asn1088, Asn1176, Asn1206, Asn1225, Asn1389, and Asn1424 each carry an N-linked (GlcNAc...) asparagine glycan. The region spanning 626 to 754 (SIWSSGIVPL…YHNTWSKLST (129 aa)) is the G8 domain.

Belongs to the comF family.

It is found in the membrane. The protein is G8 domain-containing protein DDB_G0286311 of Dictyostelium discoideum (Social amoeba).